We begin with the raw amino-acid sequence, 435 residues long: U-box domain-containing protein 21 (435 aa).

The U-box domain maps to 30–104; it reads TIPPEFQCPI…QGWCVEKGSP (75 aa). ARM repeat units lie at residues 202–241, 245–285, 288–327, and 329–369; these read LEGI…EILS, TRVH…QMVL, PEIA…AICE, and EHGR…KLWK.

The catalysed reaction is S-ubiquitinyl-[E2 ubiquitin-conjugating enzyme]-L-cysteine + [acceptor protein]-L-lysine = [E2 ubiquitin-conjugating enzyme]-L-cysteine + N(6)-ubiquitinyl-[acceptor protein]-L-lysine.. It participates in protein modification; protein ubiquitination. Functions as an E3 ubiquitin ligase. This is U-box domain-containing protein 21 (PUB21) from Arabidopsis thaliana (Mouse-ear cress).